The following is a 290-amino-acid chain: Bifunctional protein FolD 3 (290 aa).

Residues Gly163–Ser165 and Ile229 contribute to the NADP(+) site.

This sequence belongs to the tetrahydrofolate dehydrogenase/cyclohydrolase family. Homodimer.

It catalyses the reaction (6R)-5,10-methylene-5,6,7,8-tetrahydrofolate + NADP(+) = (6R)-5,10-methenyltetrahydrofolate + NADPH. It carries out the reaction (6R)-5,10-methenyltetrahydrofolate + H2O = (6R)-10-formyltetrahydrofolate + H(+). Its pathway is one-carbon metabolism; tetrahydrofolate interconversion. Its function is as follows. Catalyzes the oxidation of 5,10-methylenetetrahydrofolate to 5,10-methenyltetrahydrofolate and then the hydrolysis of 5,10-methenyltetrahydrofolate to 10-formyltetrahydrofolate. This chain is Bifunctional protein FolD 3, found in Roseobacter denitrificans (strain ATCC 33942 / OCh 114) (Erythrobacter sp. (strain OCh 114)).